The chain runs to 271 residues: (21S)-21-acetoxyl-apo-melianone synthase SDR (271 aa).

The active-site Proton donor is Ser-150. Tyr-163 serves as the catalytic Proton acceptor. Catalysis depends on Lys-167, which acts as the Proton donor/acceptor.

It belongs to the short-chain dehydrogenases/reductases (SDR) family. In terms of tissue distribution, mainly expressed in petioles.

It carries out the reaction 21-O-acetyl-isomeliandiol + A = (21S)-21-acetoxyl-apo-melianone + AH2. It functions in the pathway secondary metabolite biosynthesis; terpenoid biosynthesis. Its function is as follows. Oxidoreductase involved in the biosynthesis of limonoids triterpene natural products such as azadirachtin, an antifeedant widely used as bioinsecticide, and possessing many medicinal applications including anti-tumoral, anti-malarial, anti-rheumatic, antibacterial, anti-inflammatory, anti-pyretic and diuretic effects. Catalyzes the oxidation of 21-O-acetyl-isomeliandiol to (21S)-21-acetoxyl-apo-melianone. This Melia azedarach (Chinaberry tree) protein is (21S)-21-acetoxyl-apo-melianone synthase SDR.